The chain runs to 513 residues: ATP synthase subunit alpha (513 aa).

169–176 lines the ATP pocket; that stretch reads GDRQTGKT.

The protein belongs to the ATPase alpha/beta chains family. In terms of assembly, F-type ATPases have 2 components, CF(1) - the catalytic core - and CF(0) - the membrane proton channel. CF(1) has five subunits: alpha(3), beta(3), gamma(1), delta(1), epsilon(1). CF(0) has three main subunits: a(1), b(2) and c(9-12). The alpha and beta chains form an alternating ring which encloses part of the gamma chain. CF(1) is attached to CF(0) by a central stalk formed by the gamma and epsilon chains, while a peripheral stalk is formed by the delta and b chains.

The protein resides in the cell inner membrane. It catalyses the reaction ATP + H2O + 4 H(+)(in) = ADP + phosphate + 5 H(+)(out). Produces ATP from ADP in the presence of a proton gradient across the membrane. The alpha chain is a regulatory subunit. The sequence is that of ATP synthase subunit alpha from Ralstonia pickettii (strain 12J).